Consider the following 448-residue polypeptide: MRYLPHSEADRAAMLATIGAASVEDLFRDVPREALDQAAFDALPDHGGEMEVERALSALAARNLTAGSVPCFLGAGSYRHHVPAAVDALIQRGEFLTSYTPYQAEVSQGTLQYLFEFQTQVALITGMEVANASMYDGATACAEAAAMAVRITRRRKVLMAGGLHPHYTATTQTLLACLGHEGEGLPPDPLALGDLIGRVGSDTACVIVQNPDFFGRLRDLSPLAEACHAAGALLVVAVCEPVSLGLVAPPGAMGADIVVAEGHALGSPTGFGGPGVGLFATREKYLRQMPGRLAGETLDESGKRGYVLTLSTREQHIRREKATSNICTNSGLIALAFTIHMTLLGEAGFTRLAWINHANAVALAEKLARVKGVKVLPETFFNEFTLRLPKPAAEVVEALAARSILAGVPVSRFLPTYPELANLLLVNATELTTPEDADALVAALKEVL.

It belongs to the GcvP family. N-terminal subunit subfamily. As to quaternary structure, the glycine cleavage system is composed of four proteins: P, T, L and H. In this organism, the P 'protein' is a heterodimer of two subunits.

It catalyses the reaction N(6)-[(R)-lipoyl]-L-lysyl-[glycine-cleavage complex H protein] + glycine + H(+) = N(6)-[(R)-S(8)-aminomethyldihydrolipoyl]-L-lysyl-[glycine-cleavage complex H protein] + CO2. Functionally, the glycine cleavage system catalyzes the degradation of glycine. The P protein binds the alpha-amino group of glycine through its pyridoxal phosphate cofactor; CO(2) is released and the remaining methylamine moiety is then transferred to the lipoamide cofactor of the H protein. This Rhodospirillum rubrum (strain ATCC 11170 / ATH 1.1.1 / DSM 467 / LMG 4362 / NCIMB 8255 / S1) protein is Probable glycine dehydrogenase (decarboxylating) subunit 1.